The sequence spans 194 residues: Erythropoietin (194 aa).

A signal peptide spans 1-26 (MGARECPARLLLLSLLLLPLGLPVLG). Intrachain disulfides connect cysteine 33-cysteine 189 and cysteine 55-cysteine 59. N-linked (GlcNAc...) asparagine glycosylation is present at asparagine 50. N-linked (GlcNAc...) asparagine glycans are attached at residues asparagine 64, asparagine 109, and asparagine 172.

It belongs to the EPO/TPO family. In terms of tissue distribution, produced by kidney or liver of adult mammals and by liver of fetal or neonatal mammals.

It localises to the secreted. Functionally, hormone involved in the regulation of erythrocyte proliferation and differentiation and the maintenance of a physiological level of circulating erythrocyte mass. Binds to EPOR leading to EPOR dimerization and JAK2 activation thereby activating specific downstream effectors, including STAT1 and STAT3. This is Erythropoietin (EPO) from Sus scrofa (Pig).